Here is a 623-residue protein sequence, read N- to C-terminus: Leucine aminopeptidase 2 (623 aa).

The disordered stretch occupies residues 1–23 (MRRCTKNSRSTNPPRDPNTLSNY). Residues 7–23 (NSRSTNPPRDPNTLSNY) are compositionally biased toward polar residues. Residues 145–147 (QCQ) and 277–282 (PYGGME) contribute to the a peptide site. Zn(2+) is bound at residue histidine 306. The Proton acceptor role is filled by glutamate 307. Zn(2+) is bound by residues histidine 310 and glutamate 329. Catalysis depends on tyrosine 394, which acts as the Proton donor.

The protein belongs to the peptidase M1 family. The cofactor is Zn(2+).

It localises to the cytoplasm. It is found in the nucleus. It carries out the reaction an epoxide + H2O = an ethanediol. Aminopeptidase that preferentially cleaves di- and tripeptides. Also has low epoxide hydrolase activity (in vitro). Can hydrolyze the epoxide leukotriene LTA(4) but it forms preferentially 5,6-dihydroxy-7,9,11,14-eicosatetraenoic acid rather than the cytokine leukotriene B(4) as the product compared to the homologous mammalian enzyme (in vitro). The protein is Leucine aminopeptidase 2 of Ajellomyces capsulatus (strain NAm1 / WU24) (Darling's disease fungus).